Reading from the N-terminus, the 404-residue chain is MSLSERQKEEINRAIAEYMQNNGYSESFSVFLKESSLSENDIKPLGGILEKKWTTVLRLQRKVNDLESKLQESQREINHGAPTRDKRQAADWIPRPPETQKLTGHRLPITRVIFHPLWTIMASCSEDATIKVWDYETGQLERTLKGHTDAVNDIAIDAAGKQLVSCSSDLSIKLWDFGQTYDCLKSLKGHEHTVSSVTFLPTGDFVLSASRDHTIKQWDISTGYCVYTFRGHNDWVRMIRISNDGTLFASASLDQTVTVWSFATKSAKLVLRDHEHAVECVEWAPDTAYTNVTGQQPEGNSTHILFSGSRDRSIKAWNINTGDVLFTLLAHENWVRGLAFHPKGKYLISVADDKTLRVWELSAQRCMKAIEAHEHFVSTVAFHQTSPFVITGSVDMSCKVWECR.

Residues 7 to 39 (QKEEINRAIAEYMQNNGYSESFSVFLKESSLSE) form the LisH domain. Residues 54–81 (TTVLRLQRKVNDLESKLQESQREINHGA) are a coiled coil. Basic and acidic residues predominate over residues 69–89 (KLQESQREINHGAPTRDKRQA). Residues 69–90 (KLQESQREINHGAPTRDKRQAA) form a disordered region. WD repeat units follow at residues 104–145 (GHRL…RTLK), 146–185 (GHTD…DCLK), 189–228 (GHEH…CVYT), 231–270 (GHND…AKLV), 273–327 (DHEH…VLFT), 330–369 (AHEN…CMKA), and 372–404 (AHEH…WECR).

It belongs to the WD repeat LIS1/nudF family. As to quaternary structure, component of a dynein-regulating complex composed of at least lis-1 and nud-2. Interacts with nud-2; the interaction is direct. In terms of tissue distribution, expressed in all classes of neurons in the ventral cord. Expressed in the multinucleate spermathecal valves and adult seam cells.

The protein localises to the cytoplasm. Its subcellular location is the cytoskeleton. It is found in the microtubule organizing center. It localises to the centrosome. The protein resides in the chromosome. The protein localises to the centromere. Its subcellular location is the kinetochore. It is found in the nucleus envelope. Its function is as follows. Positively regulates the activity of the minus-end directed microtubule motor protein dynein. May enhance dynein-mediated microtubule sliding by targeting dynein to the microtubule plus end. Required for several dynein- and microtubule-dependent processes such as nuclear migration during cell division. Part of a complex with nud-2, which is recruited to the nuclear envelope by unc-83, where, in turn, it recruits dynein to the nuclear surface and regulates nuclear migration in hypodermal precursor cells. Plays a role in GABAergic synaptic vesicle localization in the ventral nerve cord. Required for neuronal cell differentiation. The polypeptide is Lissencephaly-1 homolog (Caenorhabditis elegans).